Here is a 338-residue protein sequence, read N- to C-terminus: Ketol-acid reductoisomerase (NADP(+)) (338 aa).

The 181-residue stretch at M1–T181 folds into the KARI N-terminal Rossmann domain. Residues Y24 to Q27, R47, S50, S52, and D82 to Q85 contribute to the NADP(+) site. The active site involves H107. G133 is an NADP(+) binding site. A KARI C-terminal knotted domain is found at T182 to I327. Positions 190, 194, 226, and 230 each coordinate Mg(2+). Residue S251 coordinates substrate.

This sequence belongs to the ketol-acid reductoisomerase family. The cofactor is Mg(2+).

The catalysed reaction is (2R)-2,3-dihydroxy-3-methylbutanoate + NADP(+) = (2S)-2-acetolactate + NADPH + H(+). The enzyme catalyses (2R,3R)-2,3-dihydroxy-3-methylpentanoate + NADP(+) = (S)-2-ethyl-2-hydroxy-3-oxobutanoate + NADPH + H(+). Its pathway is amino-acid biosynthesis; L-isoleucine biosynthesis; L-isoleucine from 2-oxobutanoate: step 2/4. The protein operates within amino-acid biosynthesis; L-valine biosynthesis; L-valine from pyruvate: step 2/4. In terms of biological role, involved in the biosynthesis of branched-chain amino acids (BCAA). Catalyzes an alkyl-migration followed by a ketol-acid reduction of (S)-2-acetolactate (S2AL) to yield (R)-2,3-dihydroxy-isovalerate. In the isomerase reaction, S2AL is rearranged via a Mg-dependent methyl migration to produce 3-hydroxy-3-methyl-2-ketobutyrate (HMKB). In the reductase reaction, this 2-ketoacid undergoes a metal-dependent reduction by NADPH to yield (R)-2,3-dihydroxy-isovalerate. This chain is Ketol-acid reductoisomerase (NADP(+)), found in Azotobacter vinelandii (strain DJ / ATCC BAA-1303).